The chain runs to 263 residues: L-aspartate dehydrogenase (263 aa).

Residues A120 and N186 each contribute to the NAD(+) site. H216 is an active-site residue.

Belongs to the L-aspartate dehydrogenase family.

It carries out the reaction L-aspartate + NADP(+) + H2O = oxaloacetate + NH4(+) + NADPH + H(+). The catalysed reaction is L-aspartate + NAD(+) + H2O = oxaloacetate + NH4(+) + NADH + H(+). It functions in the pathway cofactor biosynthesis; NAD(+) biosynthesis; iminoaspartate from L-aspartate (dehydrogenase route): step 1/1. Functionally, specifically catalyzes the NAD or NADP-dependent dehydrogenation of L-aspartate to iminoaspartate. The polypeptide is L-aspartate dehydrogenase (Psychrobacter cryohalolentis (strain ATCC BAA-1226 / DSM 17306 / VKM B-2378 / K5)).